Consider the following 547-residue polypeptide: Probable aquaporin-5 (547 aa).

A compositionally biased stretch (polar residues) spans 1-13 (MSSSILNNRSARS). Residues 1-208 (MSSSILNNRS…DPRIPPNDRR (208 aa)) form a disordered region. Over 1-269 (MSSSILNNRS…QWMNSNFKNH (269 aa)) the chain is Cytoplasmic. Residues 15–32 (PAGANPAFNPPAEASSSS) show a composition bias toward low complexity. Composition is skewed to basic and acidic residues over residues 152 to 169 (EYERYYRNEGRNDRDRYT) and 198 to 208 (DDPRIPPNDRR). The chain crosses the membrane as a helical span at residues 270 to 290 (FVAGVGEFIGTTMFLFFAFAG). At 291-316 (TEVANIQADTTNRTTTGESTGSLNVS) the chain is on the extracellular side. Residues N302 and N314 are each glycosylated (N-linked (GlcNAc...) asparagine). A helical transmembrane segment spans residues 317–337 (KLLYISIIFGFSLMVNVWVFF). Residues 338–363 (RISGGLFNPAVTMAMLMVKAISVTRA) lie on the Cytoplasmic side of the membrane. The short motif at 345–347 (NPA) is the NPA 1 element. Residues 364 to 384 (IVLFLAQILGSMLASVVVRYL) traverse the membrane as a helical segment. Topologically, residues 385-400 (FPETFNVRTTLGGGAS) are extracellular. The helical transmembrane segment at 401–421 (LVQGVFIEALLTAELVFTIFM) threads the bilayer. Topologically, residues 422–428 (LAKEKHR) are cytoplasmic. A helical transmembrane segment spans residues 429 to 449 (ATFIAPVGIGLALFIAEMVGV). Residues 450–475 (QFTGGSLNPARSFGPCVITGSFDTEH) are Extracellular-facing. The short motif at 457-459 (NPA) is the NPA 2 element. A helical membrane pass occupies residues 476 to 496 (WIYWVGPAIGSLIAVCFYWFI). Residues 497–547 (KTLEYEMANPGADGDDLNDPTKNPEKRAEIQASKPVPTAAFGSGKTASILS) are Cytoplasmic-facing. The disordered stretch occupies residues 510–547 (GDDLNDPTKNPEKRAEIQASKPVPTAAFGSGKTASILS).

This sequence belongs to the MIP/aquaporin (TC 1.A.8) family.

Its subcellular location is the membrane. The catalysed reaction is H2O(in) = H2O(out). Probable water channel that may have redundant functions with FgAQP3. In Gibberella zeae (strain ATCC MYA-4620 / CBS 123657 / FGSC 9075 / NRRL 31084 / PH-1) (Wheat head blight fungus), this protein is Probable aquaporin-5.